Consider the following 186-residue polypeptide: ATP synthase subunit b (186 aa).

Residues 28-48 (IVWSIIPFAVILFVFAKVVLP) form a helical membrane-spanning segment.

It belongs to the ATPase B chain family. F-type ATPases have 2 components, F(1) - the catalytic core - and F(0) - the membrane proton channel. F(1) has five subunits: alpha(3), beta(3), gamma(1), delta(1), epsilon(1). F(0) has three main subunits: a(1), b(2) and c(10-14). The alpha and beta chains form an alternating ring which encloses part of the gamma chain. F(1) is attached to F(0) by a central stalk formed by the gamma and epsilon chains, while a peripheral stalk is formed by the delta and b chains.

Its subcellular location is the cell membrane. F(1)F(0) ATP synthase produces ATP from ADP in the presence of a proton or sodium gradient. F-type ATPases consist of two structural domains, F(1) containing the extramembraneous catalytic core and F(0) containing the membrane proton channel, linked together by a central stalk and a peripheral stalk. During catalysis, ATP synthesis in the catalytic domain of F(1) is coupled via a rotary mechanism of the central stalk subunits to proton translocation. Functionally, component of the F(0) channel, it forms part of the peripheral stalk, linking F(1) to F(0). The sequence is that of ATP synthase subunit b from Corynebacterium urealyticum (strain ATCC 43042 / DSM 7109).